A 529-amino-acid polypeptide reads, in one-letter code: Cytochrome P450 monooxygenase fsoB (529 aa).

Residues 4-24 traverse the membrane as a helical segment; sequence WLLSLLIAGVVFAIFQLRTVG. Cys-436 lines the heme pocket.

The protein belongs to the cytochrome P450 family. Requires heme as cofactor.

The protein localises to the membrane. Its function is as follows. Cytochrome P450 monooxygenase; part of the gene cluster that mediates the biosynthesis of the enfumafungin-type antibiotic fuscoatroside. Four enzymes are sufficient to produce fuscoatroside: the terpene cyclase-glycosyl transferase fusion protein fsoAthe cytochrome P450 monoxygenases fsoD and fsoE, and the acetyltransferase fsoF; the cytochrome P450 monooxygenase fsoB and the glucose oxidase-like protein fsoC do not seem to play a role in biosynthesis of fuscoatroside. This Humicola fuscoatra protein is Cytochrome P450 monooxygenase fsoB.